A 241-amino-acid chain; its full sequence is Uridylate kinase (241 aa).

Residue 15-18 (KLSG) coordinates ATP. Residues 23–28 (GSEGFG) form an involved in allosteric activation by GTP region. Residue Gly-57 coordinates UMP. The ATP site is built by Gly-58 and Arg-62. Residues Asp-77 and 138–145 (TGNPFFTT) contribute to the UMP site. The ATP site is built by Thr-165, Phe-171, and Asp-174.

Belongs to the UMP kinase family. As to quaternary structure, homohexamer.

It is found in the cytoplasm. It carries out the reaction UMP + ATP = UDP + ADP. The protein operates within pyrimidine metabolism; CTP biosynthesis via de novo pathway; UDP from UMP (UMPK route): step 1/1. Its activity is regulated as follows. Allosterically activated by GTP. Inhibited by UTP. Its function is as follows. Catalyzes the reversible phosphorylation of UMP to UDP. The sequence is that of Uridylate kinase from Klebsiella pneumoniae subsp. pneumoniae (strain ATCC 700721 / MGH 78578).